The chain runs to 141 residues: Large ribosomal subunit protein uL11 (141 aa).

This sequence belongs to the universal ribosomal protein uL11 family. In terms of assembly, part of the ribosomal stalk of the 50S ribosomal subunit. Interacts with L10 and the large rRNA to form the base of the stalk. L10 forms an elongated spine to which L12 dimers bind in a sequential fashion forming a multimeric L10(L12)X complex. Post-translationally, one or more lysine residues are methylated.

In terms of biological role, forms part of the ribosomal stalk which helps the ribosome interact with GTP-bound translation factors. This chain is Large ribosomal subunit protein uL11, found in Clostridium botulinum (strain Alaska E43 / Type E3).